The following is a 338-amino-acid chain: Envelope glycoprotein K (338 aa).

Positions Met-1–Gly-30 are cleaved as a signal peptide. Residues Ala-31–Thr-121 are Extracellular-facing. The interval Ala-31–Thr-121 is involved in fusion. 2 N-linked (GlcNAc...) asparagine; by host glycosylation sites follow: Asn-48 and Asn-58. Residues Arg-122–His-140 traverse the membrane as a helical segment. At Gln-141–Pro-212 the chain is on the cytoplasmic side. Residues Ala-213–Val-233 form a helical membrane-spanning segment. The Extracellular segment spans residues Gly-234–Cys-243. A helical membrane pass occupies residues Ala-244–Leu-264. Residues Thr-265–Ser-301 are Cytoplasmic-facing. Residues Thr-265 to Ser-301 form an interaction with UL20 region. The chain crosses the membrane as a helical span at residues Ile-302–Leu-322. The Extracellular portion of the chain corresponds to Val-323 to Val-338.

Belongs to the alphaherpesvirinae glycoprotein K family. In terms of assembly, interacts (via UL20 interaction region) with protein UL20 (via N-terminus); this interaction probably plays a role in the coordinate transport of protein UL20 and gK to the trans-Golgi network (TGN), and is required for the cell surface expression of gK. Post-translationally, N-glycosylated.

The protein localises to the host cell membrane. It is found in the host endosome membrane. It localises to the host Golgi apparatus membrane. In terms of biological role, glycoprotein that probably modulates membrane fusion events during secondary envelopment of cytoplasmic capsids that bud into specific trans-Golgi network (TGN)-derived membranes. Also plays a role, together with gB, in virus-induced cell-to-cell fusion (syncytia formation). Seems to block fusion of virions with infected-cell membranes. The protein is Envelope glycoprotein K (gK) of Homo sapiens (Human).